A 426-amino-acid chain; its full sequence is Histidine--tRNA ligase (426 aa).

This sequence belongs to the class-II aminoacyl-tRNA synthetase family. In terms of assembly, homodimer.

Its subcellular location is the cytoplasm. It carries out the reaction tRNA(His) + L-histidine + ATP = L-histidyl-tRNA(His) + AMP + diphosphate + H(+). This is Histidine--tRNA ligase from Malacoplasma penetrans (strain HF-2) (Mycoplasma penetrans).